Reading from the N-terminus, the 342-residue chain is Ribosomal RNA small subunit methyltransferase H (342 aa).

S-adenosyl-L-methionine-binding positions include 43-45 (GGY), Asp-61, Phe-87, Asp-108, and Gln-115. The tract at residues 322–342 (ALDEASDGMNLPPLAELEKSR) is disordered.

It belongs to the methyltransferase superfamily. RsmH family.

It is found in the cytoplasm. The enzyme catalyses cytidine(1402) in 16S rRNA + S-adenosyl-L-methionine = N(4)-methylcytidine(1402) in 16S rRNA + S-adenosyl-L-homocysteine + H(+). In terms of biological role, specifically methylates the N4 position of cytidine in position 1402 (C1402) of 16S rRNA. In Hyphomonas neptunium (strain ATCC 15444), this protein is Ribosomal RNA small subunit methyltransferase H.